The sequence spans 853 residues: MFLPHMNHLTLEQTFFSQVLPKTVKLFDDMMYELTSQARGLSSQNLEIQTTLRNILQTMVQLLGALTGCVQHICATQESIILENIQSLPSSVLHIIKSTFVHCKNSESVYSGCLHLVSDLLQALFKEAYSLQKQLMELLDMVCMDPLVDDNDDILNMVIVIHSLLDICSVISSMDHAFHANTWKFIIKQSLKHQSIIKSQLKHKDIITSLCEDILFSFHSCLQLAEQMTQSDAQDNADYRLFQKTLKLCRFFANSLLHYAKEFLPFLSDSCCTLHQLYLQIHSKFPPSLYATRISKAHQEEIAGAFLVTLDPLISQLLTFQPFMQVVLDSKLDLPCELQFPQCLLLVVVMDKLPSQPKEVQTLWCTDSQVSETTTRISLLKAVFYSFEQCSGELSLPVHLQGLKSKGKAEVAVTLYQHVCVHLCTFITSFHPSLFAELDAALLNAVLSANMITSLLAMDAWCFLARYGTAELCAHHVTIVAHLIKSCPGECYQLINLSILLKRLFFFMAPPHQLEFIQKFSPKEAENLPLWQHISFQALPPELREQTVHEVTTVGTAECRKWLSRSRTLGELESLNTVLSALLAVCNSAGEALDTGKQTAIIEVVSQLWAFLNIKQVADQPYVQQTFSLLLPLLGFFIQTLDPKLILQAVTLQTSLLKLELPDYVRLAMLDFVSSLGKLFIPEAIQDRILPNLSCMFALLLADRSWLLEQHTLEAFTQFAEGTNHEEIVPQCLSSEETKNKVVSFLEKTGFVDETEAAKVERVKQEKGIFWEPFANVTVEEAKRSSLQPYAKRARQEFPWEEEYRSALHTIAGALEATESLLQKGPAPAWLSMEMEALQERMDKLKRYIHTLG.

A phosphoserine; by PLK1 mark is found at S43 and S744. K792 bears the N6-acetyllysine mark.

In terms of assembly, interacts (via its N-terminal region) with PLK1; controls PLK1 kinase activity. Interacts (via the KVVXF motif) with PPP1CC; controls PLK1 kinase activity. Interacts with FIGNL1; may regulate homologous recombination. In terms of processing, phosphorylation at Ser-43 by PLK1 strengthens FIRRM-PLK1 interaction. Phosphorylation at Ser-744 by PLK1 negatively regulates its interaction with PPP1CC.

It is found in the chromosome. Its subcellular location is the centromere. The protein resides in the kinetochore. It localises to the nucleus. The protein localises to the midbody. It is found in the cytoplasm. Its subcellular location is the cytoskeleton. The protein resides in the spindle. Functionally, regulates PLK1 kinase activity at kinetochores and promotes faithful chromosome segregation in prometaphase by bridging kinase and phosphatase activities. Phosphorylation of FIRRM by PLK1 negatively regulates its interaction with the phosphatase, PPP1CC, thus creating a negative feedback loop for maintaining proper PLK1 kinase activity during mitosis. In complex with FIGL1 may regulate homologous recombination. The polypeptide is FIGNL1-interacting regulator of recombination and mitosis (Homo sapiens (Human)).